The sequence spans 270 residues: uncharacterized protein (270 aa).

Disordered stretches follow at residues Ile-35–Lys-67 and Ser-168–Asn-204. Over residues Asn-39–Asn-48 the composition is skewed to low complexity. The span at Val-49–Lys-67 shows a compositional bias: polar residues. Low complexity predominate over residues Ser-168–Asn-191.

This is an uncharacterized protein from Dictyostelium discoideum (Social amoeba).